Here is a 522-residue protein sequence, read N- to C-terminus: 56 kDa type-specific antigen (522 aa).

The N-terminal stretch at 1 to 22 is a signal peptide; sequence MKKIMLIASAMSALSLPFSASA. The helical transmembrane segment at 67–87 threads the bilayer; it reads LTTMLPFGGTLAAGMTIAPGF. Residues 385-417 form a disordered region; the sequence is AQEEGDDQSQVSCNDKKQQAVAEDSKAGSSKEG. Positions 398–417 are enriched in basic and acidic residues; sequence NDKKQQAVAEDSKAGSSKEG. Residues 470–490 form a helical membrane-spanning segment; that stretch reads IGVVASGVLGVAINVADGVCV.

It is found in the cell membrane. May be an adherent factor for rickettsial adsorption to the host-cell surface and a determinant of virulence of individual rickettsial strain. It is the major outer membrane protein. The sequence is that of 56 kDa type-specific antigen from Orientia tsutsugamushi (Rickettsia tsutsugamushi).